Reading from the N-terminus, the 238-residue chain is Probable septum site-determining protein MinC (238 aa).

This sequence belongs to the MinC family. Interacts with MinD and FtsZ.

Cell division inhibitor that blocks the formation of polar Z ring septums. Rapidly oscillates between the poles of the cell to destabilize FtsZ filaments that have formed before they mature into polar Z rings. Prevents FtsZ polymerization. In Xylella fastidiosa (strain M23), this protein is Probable septum site-determining protein MinC.